The sequence spans 152 residues: Deoxyuridine 5'-triphosphate nucleotidohydrolase (152 aa).

Substrate-binding positions include 71 to 73 (RSG), Asn-84, 88 to 90 (LID), and Met-98.

This sequence belongs to the dUTPase family. Mg(2+) is required as a cofactor.

It carries out the reaction dUTP + H2O = dUMP + diphosphate + H(+). The protein operates within pyrimidine metabolism; dUMP biosynthesis; dUMP from dCTP (dUTP route): step 2/2. Functionally, this enzyme is involved in nucleotide metabolism: it produces dUMP, the immediate precursor of thymidine nucleotides and it decreases the intracellular concentration of dUTP so that uracil cannot be incorporated into DNA. The sequence is that of Deoxyuridine 5'-triphosphate nucleotidohydrolase from Shewanella baltica (strain OS155 / ATCC BAA-1091).